A 320-amino-acid chain; its full sequence is Malate dehydrogenase (320 aa).

Residues 10–15 (GAGQIG) and aspartate 34 contribute to the NAD(+) site. Substrate is bound by residues arginine 83 and arginine 89. NAD(+) contacts are provided by residues asparagine 96 and 119 to 121 (ITN). Residues asparagine 121 and arginine 152 each contribute to the substrate site. The active-site Proton acceptor is the histidine 176.

It belongs to the LDH/MDH superfamily. MDH type 3 family.

The enzyme catalyses (S)-malate + NAD(+) = oxaloacetate + NADH + H(+). Functionally, catalyzes the reversible oxidation of malate to oxaloacetate. The polypeptide is Malate dehydrogenase (Ruegeria pomeroyi (strain ATCC 700808 / DSM 15171 / DSS-3) (Silicibacter pomeroyi)).